The primary structure comprises 702 residues: Ribosomal RNA large subunit methyltransferase K/L (702 aa).

Residues 43–154 (LIYQSLMWSR…KETAHISLDL (112 aa)) enclose the THUMP domain.

Belongs to the methyltransferase superfamily. RlmKL family.

It localises to the cytoplasm. The enzyme catalyses guanosine(2445) in 23S rRNA + S-adenosyl-L-methionine = N(2)-methylguanosine(2445) in 23S rRNA + S-adenosyl-L-homocysteine + H(+). The catalysed reaction is guanosine(2069) in 23S rRNA + S-adenosyl-L-methionine = N(2)-methylguanosine(2069) in 23S rRNA + S-adenosyl-L-homocysteine + H(+). Specifically methylates the guanine in position 2445 (m2G2445) and the guanine in position 2069 (m7G2069) of 23S rRNA. This chain is Ribosomal RNA large subunit methyltransferase K/L, found in Enterobacter sp. (strain 638).